Consider the following 161-residue polypeptide: Cyclic pyranopterin monophosphate synthase (161 aa).

Substrate-binding positions include 75-77 (LCH) and 113-114 (ME). D128 is an active-site residue.

It belongs to the MoaC family. In terms of assembly, homohexamer; trimer of dimers.

It catalyses the reaction (8S)-3',8-cyclo-7,8-dihydroguanosine 5'-triphosphate = cyclic pyranopterin phosphate + diphosphate. It participates in cofactor biosynthesis; molybdopterin biosynthesis. Catalyzes the conversion of (8S)-3',8-cyclo-7,8-dihydroguanosine 5'-triphosphate to cyclic pyranopterin monophosphate (cPMP). The protein is Cyclic pyranopterin monophosphate synthase of Salmonella typhi.